A 468-amino-acid chain; its full sequence is ATP synthase subunit beta (468 aa).

Position 148-155 (148-155 (GGAGVGKT)) interacts with ATP.

Belongs to the ATPase alpha/beta chains family. In terms of assembly, F-type ATPases have 2 components, CF(1) - the catalytic core - and CF(0) - the membrane proton channel. CF(1) has five subunits: alpha(3), beta(3), gamma(1), delta(1), epsilon(1). CF(0) has three main subunits: a(1), b(2) and c(9-12). The alpha and beta chains form an alternating ring which encloses part of the gamma chain. CF(1) is attached to CF(0) by a central stalk formed by the gamma and epsilon chains, while a peripheral stalk is formed by the delta and b chains.

Its subcellular location is the cell inner membrane. The catalysed reaction is ATP + H2O + 4 H(+)(in) = ADP + phosphate + 5 H(+)(out). Produces ATP from ADP in the presence of a proton gradient across the membrane. The catalytic sites are hosted primarily by the beta subunits. This chain is ATP synthase subunit beta, found in Xanthomonas campestris pv. campestris (strain B100).